Consider the following 482-residue polypeptide: Glutamyl-tRNA(Gln) amidotransferase subunit A (482 aa).

Catalysis depends on charge relay system residues Lys-75 and Ser-150. Ser-174 (acyl-ester intermediate) is an active-site residue.

Belongs to the amidase family. GatA subfamily. Heterotrimer of A, B and C subunits.

The enzyme catalyses L-glutamyl-tRNA(Gln) + L-glutamine + ATP + H2O = L-glutaminyl-tRNA(Gln) + L-glutamate + ADP + phosphate + H(+). In terms of biological role, allows the formation of correctly charged Gln-tRNA(Gln) through the transamidation of misacylated Glu-tRNA(Gln) in organisms which lack glutaminyl-tRNA synthetase. The reaction takes place in the presence of glutamine and ATP through an activated gamma-phospho-Glu-tRNA(Gln). This chain is Glutamyl-tRNA(Gln) amidotransferase subunit A, found in Deinococcus radiodurans (strain ATCC 13939 / DSM 20539 / JCM 16871 / CCUG 27074 / LMG 4051 / NBRC 15346 / NCIMB 9279 / VKM B-1422 / R1).